Consider the following 98-residue polypeptide: Small ribosomal subunit protein bS16 (98 aa).

The protein belongs to the bacterial ribosomal protein bS16 family.

This is Small ribosomal subunit protein bS16 from Pseudothermotoga lettingae (strain ATCC BAA-301 / DSM 14385 / NBRC 107922 / TMO) (Thermotoga lettingae).